The sequence spans 316 residues: Mycothiol acetyltransferase (316 aa).

2 N-acetyltransferase domains span residues 16 to 153 (REVR…VPAV) and 156 to 316 (VRIR…PAAN). Residue glutamate 36 coordinates 1D-myo-inositol 2-(L-cysteinylamino)-2-deoxy-alpha-D-glucopyranoside. Acetyl-CoA is bound by residues 83–85 (LVV) and 91–96 (RRGIGS). Residues glutamate 183, lysine 228, and glutamate 238 each contribute to the 1D-myo-inositol 2-(L-cysteinylamino)-2-deoxy-alpha-D-glucopyranoside site. Residues 242 to 244 (VGV) and 249 to 255 (QGRGLGQ) each bind acetyl-CoA. A 1D-myo-inositol 2-(L-cysteinylamino)-2-deoxy-alpha-D-glucopyranoside-binding site is contributed by tyrosine 283. 288–293 (NVAAVR) contributes to the acetyl-CoA binding site.

The protein belongs to the acetyltransferase family. MshD subfamily. Monomer.

It carries out the reaction 1D-myo-inositol 2-(L-cysteinylamino)-2-deoxy-alpha-D-glucopyranoside + acetyl-CoA = mycothiol + CoA + H(+). In terms of biological role, catalyzes the transfer of acetyl from acetyl-CoA to desacetylmycothiol (Cys-GlcN-Ins) to form mycothiol. The polypeptide is Mycothiol acetyltransferase (Mycolicibacterium paratuberculosis (strain ATCC BAA-968 / K-10) (Mycobacterium paratuberculosis)).